A 370-amino-acid polypeptide reads, in one-letter code: MADNNSILEKLDGLVARFEEVSTLITDPAVIADQKRYVKLTKEYKELDDLMKARKEYMQLLANIEEAKDILSNESDADMREMAKEEMDNSQERLPVLEEEIKLLLVPADPQDGKNAILEIRGGTGGDEAAIFAGDLFRMYAKFCETKGWKMEVSSANEGAAGGYKEIICSVTGDNVYGTLKYESGVHRVQRVPATETQGRVHTSAASVAVLPEAEEFDVVINEGEIKWDTFRSGGAGGQNVNKVESGVRLRYIWKNPNTGVAEEILIECTETRDQPKNKERALARLRTFIYDKEHQKYIDDIASKRKTMVSTGDRSAKIRTYNYPQGRITDHRINYTIYNLAAFMDGDIQECIDKLTVAENAERLKESEL.

Residue glutamine 239 is modified to N5-methylglutamine.

This sequence belongs to the prokaryotic/mitochondrial release factor family. Methylated by PrmC. Methylation increases the termination efficiency of RF1.

It localises to the cytoplasm. Its function is as follows. Peptide chain release factor 1 directs the termination of translation in response to the peptide chain termination codons UAG and UAA. This chain is Peptide chain release factor 1, found in Bacteroides fragilis (strain ATCC 25285 / DSM 2151 / CCUG 4856 / JCM 11019 / LMG 10263 / NCTC 9343 / Onslow / VPI 2553 / EN-2).